Reading from the N-terminus, the 67-residue chain is DLITNSYTRGKPRHVTSWRNLRTDVCKKSPGKCIHNGCFCEQDKPQGNCCDSGGCTVKWWCPGTKGD.

A propeptide spanning residues 1-21 is cleaved from the precursor; it reads DLITNSYTRGKPRHVTSWRNL.

Contains 4 disulfide bonds. As to expression, expressed by the venom duct.

The protein resides in the secreted. This Californiconus californicus (California cone) protein is Conotoxin Cal12.1p2.